A 228-amino-acid chain; its full sequence is 7-cyano-7-deazaguanine synthase (228 aa).

Position 16–26 (16–26 (FSGGQDSTTCL)) interacts with ATP. Positions 195, 203, 206, and 209 each coordinate Zn(2+).

The protein belongs to the QueC family. The cofactor is Zn(2+).

It catalyses the reaction 7-carboxy-7-deazaguanine + NH4(+) + ATP = 7-cyano-7-deazaguanine + ADP + phosphate + H2O + H(+). The protein operates within purine metabolism; 7-cyano-7-deazaguanine biosynthesis. Functionally, catalyzes the ATP-dependent conversion of 7-carboxy-7-deazaguanine (CDG) to 7-cyano-7-deazaguanine (preQ(0)). This is 7-cyano-7-deazaguanine synthase from Haemophilus influenzae (strain ATCC 51907 / DSM 11121 / KW20 / Rd).